The following is a 303-amino-acid chain: Uricase (303 aa).

At Ala2 the chain carries N-acetylalanine. Lys10 and Lys23 each carry N6-acetyllysine; alternate. 2 positions are modified to N6-succinyllysine; alternate: Lys10 and Lys23. Residue Lys23 is the Charge relay system of the active site. N6-acetyllysine is present on residues Lys27 and Lys36. A phosphoserine mark is found at Ser39 and Ser63. Residue Thr68 is the Charge relay system of the active site. Urate-binding residues include Thr68 and Asp69. 3 positions are modified to N6-acetyllysine: Lys118, Lys122, and Lys164. A urate-binding site is contributed by Phe170. 2 positions are modified to N6-acetyllysine: Lys175 and Lys185. Arg187 contributes to the urate binding site. N6-acetyllysine; alternate is present on residues Lys220 and Lys227. 2 positions are modified to N6-succinyllysine; alternate: Lys220 and Lys227. Position 231 is a phosphoserine (Ser231). Residues Val234, Gln235, and Asn261 each contribute to the urate site. The Charge relay system role is filled by His263. Lys277 carries the post-translational modification N6-acetyllysine. The residue at position 288 (Tyr288) is a Phosphotyrosine. Positions 301-303 match the Microbody targeting signal motif; the sequence is SRL.

Belongs to the uricase family. In terms of processing, acetylation of Lys-118, Lys-164 and Lys-290 is observed in liver mitochondria from fasted mice but not from fed mice. May be deacetylated by Sirt5; however it is unclear whether Sirt5 mediates deacetylation or desuccinylation of Uox; additional evidence is required to validate these results.

The protein localises to the peroxisome. It is found in the mitochondrion. The enzyme catalyses urate + O2 + H2O = 5-hydroxyisourate + H2O2. The protein operates within purine metabolism; urate degradation; (S)-allantoin from urate: step 1/3. In terms of biological role, catalyzes the oxidation of uric acid to 5-hydroxyisourate, which is further processed to form (S)-allantoin. The protein is Uricase (Uox) of Mus musculus (Mouse).